Here is a 360-residue protein sequence, read N- to C-terminus: uncharacterized protein (360 aa).

The ABC transporter domain occupies 4 to 235 (LSLQHIQKIY…PANMFVAGFI (232 aa)). 37–44 (GPSGCGKS) contributes to the ATP binding site.

It belongs to the ABC transporter superfamily.

This is an uncharacterized protein from Escherichia coli O6:H1 (strain CFT073 / ATCC 700928 / UPEC).